The primary structure comprises 401 residues: Type 3 secretion system translocon protein SctE (401 aa).

The stretch at 129–160 (IQRLHEQNMKKIEENQEKIKETEENAKQVKKS) forms a coiled coil. The next 2 helical transmembrane spans lie at 176–196 (VIVG…AMMV) and 224–244 (ILGP…TVMT). Positions 345 to 379 (LALNKADMAALQSIIDRLKEELSHLSESHQQVMEL) form a coiled coil.

Belongs to the SctE/SipB/YopB family. In terms of assembly, the core secretion machinery of the T3SS is composed of approximately 20 different proteins, including cytoplasmic components, a base, an export apparatus and a needle. This subunit is involved in the formation of a pore, called the translocon, in host membrane. Interacts with YopD/SctB. Together with YopD/SctB, forms a multimeric integral membrane complex.

It is found in the secreted. The protein resides in the host membrane. Component of the type III secretion system (T3SS), also called injectisome, which is used to inject bacterial effector proteins into eukaryotic host cells. YopB/SctE and YopD/SctB are inserted into the host membrane where they form a pore and allow the translocation of effector proteins into the cytosol of target cells. Is an essential virulence determinant. Required for YopE and YopH translocation. Shows membrane disruptive activity in vitro. Functionally, interaction with the host cell triggers a signaling response, via activation of the small GTPase Ras, the MAPK kinases ERK and JNK and the nuclear factor NF-kappa-B pathways, and production of the proinflammatory cytokine interleukin-8 (IL-8). YopB/SctE-dependent signaling response is counteracted by YopE, YopH and YopJ in infected host cells. YopB/SctE is directly responsible for signaling and its insertion in the membrane is important to activate the signaling response in the host cell. The chain is Type 3 secretion system translocon protein SctE from Yersinia pseudotuberculosis serotype I (strain IP32953).